Consider the following 124-residue polypeptide: Fluoride-specific ion channel FluC (124 aa).

4 consecutive transmembrane segments (helical) span residues 4 to 24, 35 to 55, 60 to 80, and 95 to 115; these read VLLVALGGSIGAVFRYLISIF, FGTLVVNVIGSFFMGVIYALG, ISPELKALIGVGLLGALTTFS, and WLKAILNVVLNLSLCLFMVYL. 2 residues coordinate Na(+): G74 and T77.

Belongs to the fluoride channel Fluc/FEX (TC 1.A.43) family.

It is found in the cell inner membrane. The catalysed reaction is fluoride(in) = fluoride(out). Na(+) is not transported, but it plays an essential structural role and its presence is essential for fluoride channel function. Its function is as follows. Fluoride-specific ion channel. Important for reducing fluoride concentration in the cell, thus reducing its toxicity. This Shewanella putrefaciens (strain CN-32 / ATCC BAA-453) protein is Fluoride-specific ion channel FluC.